Consider the following 552-residue polypeptide: Arginine--tRNA ligase (552 aa).

The short motif at 123-133 (ANPTGPLTIGR) is the 'HIGH' region element.

This sequence belongs to the class-I aminoacyl-tRNA synthetase family. As to quaternary structure, monomer.

Its subcellular location is the cytoplasm. It catalyses the reaction tRNA(Arg) + L-arginine + ATP = L-arginyl-tRNA(Arg) + AMP + diphosphate. The protein is Arginine--tRNA ligase of Chlorobium luteolum (strain DSM 273 / BCRC 81028 / 2530) (Pelodictyon luteolum).